A 334-amino-acid chain; its full sequence is Aspartate carbamoyltransferase catalytic subunit (334 aa).

Positions 71 and 72 each coordinate carbamoyl phosphate. L-aspartate is bound at residue Lys-99. The carbamoyl phosphate site is built by Arg-121, His-151, and Gln-154. The L-aspartate site is built by Arg-184 and Arg-239. The carbamoyl phosphate site is built by Gly-280 and Pro-281.

Belongs to the aspartate/ornithine carbamoyltransferase superfamily. ATCase family. As to quaternary structure, heterododecamer (2C3:3R2) of six catalytic PyrB chains organized as two trimers (C3), and six regulatory PyrI chains organized as three dimers (R2).

It carries out the reaction carbamoyl phosphate + L-aspartate = N-carbamoyl-L-aspartate + phosphate + H(+). It functions in the pathway pyrimidine metabolism; UMP biosynthesis via de novo pathway; (S)-dihydroorotate from bicarbonate: step 2/3. In terms of biological role, catalyzes the condensation of carbamoyl phosphate and aspartate to form carbamoyl aspartate and inorganic phosphate, the committed step in the de novo pyrimidine nucleotide biosynthesis pathway. The sequence is that of Aspartate carbamoyltransferase catalytic subunit from Pseudomonas putida (strain ATCC 47054 / DSM 6125 / CFBP 8728 / NCIMB 11950 / KT2440).